We begin with the raw amino-acid sequence, 160 residues long: Small ribosomal subunit protein uS7 (160 aa).

It belongs to the universal ribosomal protein uS7 family. In terms of assembly, part of the 30S ribosomal subunit. Contacts proteins S9 and S11.

Its function is as follows. One of the primary rRNA binding proteins, it binds directly to 16S rRNA where it nucleates assembly of the head domain of the 30S subunit. Is located at the subunit interface close to the decoding center, probably blocks exit of the E-site tRNA. This is Small ribosomal subunit protein uS7 from Rickettsia canadensis (strain McKiel).